Reading from the N-terminus, the 118-residue chain is MLKSIQKRKNKLRAQRKARVKGKIFGTAELPRLTVYKSNKHFYAQAIDDNAGATLASADGRKLGLGANREDVKKVAAEMAKNLASANIETVVFDRNGYLYHGVVASFADALREAGIKF.

This sequence belongs to the universal ribosomal protein uL18 family. In terms of assembly, part of the 50S ribosomal subunit; part of the 5S rRNA/L5/L18/L25 subcomplex. Contacts the 5S and 23S rRNAs.

Functionally, this is one of the proteins that bind and probably mediate the attachment of the 5S RNA into the large ribosomal subunit, where it forms part of the central protuberance. This is Large ribosomal subunit protein uL18 from Sulfurovum sp. (strain NBC37-1).